A 136-amino-acid chain; its full sequence is Small ribosomal subunit protein uS9 (136 aa).

A disordered region spans residues 111–136 (DARRTEPHKPSRSTKGPRAKRQKSYR). The span at 120–136 (PSRSTKGPRAKRQKSYR) shows a compositional bias: basic residues.

This sequence belongs to the universal ribosomal protein uS9 family.

This is Small ribosomal subunit protein uS9 (rps9) from Methanocaldococcus jannaschii (strain ATCC 43067 / DSM 2661 / JAL-1 / JCM 10045 / NBRC 100440) (Methanococcus jannaschii).